A 126-amino-acid polypeptide reads, in one-letter code: Histone H2B type 2-E (126 aa).

The segment covering 1–12 (MPEPAKSAPAPK) has biased composition (low complexity). The tract at residues 1 to 35 (MPEPAKSAPAPKKGSKKAVTKAQKKDGKKRKRSRK) is disordered. P2 carries the N-acetylproline modification. E3 is modified (ADP-ribosyl glutamic acid). N6-(2-hydroxyisobutyryl)lysine; alternate is present on K6. The residue at position 6 (K6) is an N6-(beta-hydroxybutyryl)lysine; alternate. K6 carries the post-translational modification N6-acetyllysine; alternate. At K6 the chain carries N6-butyryllysine; alternate. K6 is subject to N6-crotonyllysine; alternate. K6 carries the post-translational modification N6-lactoyllysine; alternate. Residue K6 forms a Glycyl lysine isopeptide (Lys-Gly) (interchain with G-Cter in SUMO2); alternate linkage. S7 carries the post-translational modification ADP-ribosylserine. Position 12 is an N6-(beta-hydroxybutyryl)lysine; alternate (K12). K12 and K13 each carry N6-acetyllysine; alternate. K12 and K13 each carry N6-crotonyllysine; alternate. N6-lactoyllysine; alternate is present on K12. An N6-(2-hydroxyisobutyryl)lysine; alternate modification is found at K13. S15 is modified (phosphoserine; by STK4/MST1). N6-acetyllysine; alternate is present on residues K16, K17, K21, and K24. 4 positions are modified to N6-crotonyllysine; alternate: K16, K17, K21, and K24. An N6-lactoyllysine; alternate mark is found at K16, K17, K21, and K24. N6-(beta-hydroxybutyryl)lysine; alternate occurs at positions 17 and 21. K17 bears the N6-glutaryllysine; alternate mark. K21 and K24 each carry N6-(2-hydroxyisobutyryl)lysine; alternate. K21 carries the N6-butyryllysine; alternate modification. A Glycyl lysine isopeptide (Lys-Gly) (interchain with G-Cter in SUMO2); alternate cross-link involves residue K21. K25 bears the N6-(2-hydroxyisobutyryl)lysine mark. The residue at position 35 (K35) is an N6-(2-hydroxyisobutyryl)lysine; alternate. K35 is subject to N6-(beta-hydroxybutyryl)lysine; alternate. The residue at position 35 (K35) is an N6-crotonyllysine; alternate. The residue at position 35 (K35) is an N6-glutaryllysine; alternate. K35 is subject to N6-succinyllysine; alternate. A Glycyl lysine isopeptide (Lys-Gly) (interchain with G-Cter in ubiquitin); alternate cross-link involves residue K35. E36 is subject to PolyADP-ribosyl glutamic acid. S37 is modified (phosphoserine; by AMPK). K44, K47, and K58 each carry N6-(2-hydroxyisobutyryl)lysine; alternate. Residue K44 is modified to N6-lactoyllysine; alternate. 2 positions are modified to N6-glutaryllysine; alternate: K44 and K47. Residue K47 is modified to N6-methyllysine; alternate. K58 is modified (N6,N6-dimethyllysine; alternate). Residue R80 is modified to Dimethylated arginine. At K86 the chain carries N6-(2-hydroxyisobutyryl)lysine; alternate. Position 86 is an N6-(beta-hydroxybutyryl)lysine; alternate (K86). K86 is subject to N6-acetyllysine; alternate. At K86 the chain carries N6-lactoyllysine; alternate. At K86 the chain carries N6,N6,N6-trimethyllysine; alternate. Omega-N-methylarginine is present on residues R87 and R93. An N6-(2-hydroxyisobutyryl)lysine; alternate modification is found at K109. The residue at position 109 (K109) is an N6-lactoyllysine; alternate. Residue K109 is modified to N6-glutaryllysine; alternate. K109 bears the N6-methyllysine; alternate mark. S113 carries an O-linked (GlcNAc) serine glycan. Phosphothreonine is present on T116. Residues K117 and K121 each carry the N6-(2-hydroxyisobutyryl)lysine; alternate modification. N6-(beta-hydroxybutyryl)lysine; alternate occurs at positions 117 and 121. Residues K117 and K121 each carry the N6-lactoyllysine; alternate modification. Residues K117 and K121 each carry the N6-glutaryllysine; alternate modification. K117 and K121 each carry N6-succinyllysine; alternate. The residue at position 117 (K117) is an N6-malonyllysine; alternate. An N6-methylated lysine; alternate modification is found at K117. Residue K121 forms a Glycyl lysine isopeptide (Lys-Gly) (interchain with G-Cter in ubiquitin); alternate linkage.

This sequence belongs to the histone H2B family. The nucleosome is a histone octamer containing two molecules each of H2A, H2B, H3 and H4 assembled in one H3-H4 heterotetramer and two H2A-H2B heterodimers. The octamer wraps approximately 147 bp of DNA. Post-translationally, monoubiquitination at Lys-35 (H2BK34Ub) by the MSL1/MSL2 dimer is required for histone H3 'Lys-4' (H3K4me) and 'Lys-79' (H3K79me) methylation and transcription activation at specific gene loci, such as HOXA9 and MEIS1 loci. Similarly, monoubiquitination at Lys-121 (H2BK120Ub) by the RNF20/40 complex gives a specific tag for epigenetic transcriptional activation and is also prerequisite for histone H3 'Lys-4' and 'Lys-79' methylation. It also functions cooperatively with the FACT dimer to stimulate elongation by RNA polymerase II. H2BK120Ub also acts as a regulator of mRNA splicing: deubiquitination by USP49 is required for efficient cotranscriptional splicing of a large set of exons. In terms of processing, phosphorylation at Ser-37 (H2BS36ph) by AMPK in response to stress promotes transcription. Phosphorylated on Ser-15 (H2BS14ph) by STK4/MST1 during apoptosis; which facilitates apoptotic chromatin condensation. Also phosphorylated on Ser-15 in response to DNA double strand breaks (DSBs), and in correlation with somatic hypermutation and immunoglobulin class-switch recombination. GlcNAcylation at Ser-113 promotes monoubiquitination of Lys-121. It fluctuates in response to extracellular glucose, and associates with transcribed genes. Post-translationally, ADP-ribosylated by PARP1 or PARP2 on Ser-7 (H2BS6ADPr) in response to DNA damage. H2BS6ADPr promotes recruitment of CHD1L. Mono-ADP-ribosylated on Glu-3 (H2BE2ADPr) by PARP3 in response to single-strand breaks. Poly ADP-ribosylation on Glu-36 (H2BE35ADPr) by PARP1 regulates adipogenesis: it inhibits phosphorylation at Ser-37 (H2BS36ph), thereby blocking expression of pro-adipogenetic genes. In terms of processing, crotonylation (Kcr) is specifically present in male germ cells and marks testis-specific genes in post-meiotic cells, including X-linked genes that escape sex chromosome inactivation in haploid cells. Crotonylation marks active promoters and enhancers and confers resistance to transcriptional repressors. It is also associated with post-meiotically activated genes on autosomes. Lactylated in macrophages by EP300/P300 by using lactoyl-CoA directly derived from endogenous or exogenous lactate, leading to stimulates gene transcription.

The protein resides in the nucleus. It is found in the chromosome. Functionally, core component of nucleosome. Nucleosomes wrap and compact DNA into chromatin, limiting DNA accessibility to the cellular machineries which require DNA as a template. Histones thereby play a central role in transcription regulation, DNA repair, DNA replication and chromosomal stability. DNA accessibility is regulated via a complex set of post-translational modifications of histones, also called histone code, and nucleosome remodeling. Its function is as follows. Has broad antibacterial activity. May contribute to the formation of the functional antimicrobial barrier of the colonic epithelium, and to the bactericidal activity of amniotic fluid. The protein is Histone H2B type 2-E of Homo sapiens (Human).